We begin with the raw amino-acid sequence, 85 residues long: Phosphocarrier protein HPr (85 aa).

Positions 1 to 85 constitute an HPr domain; sequence MFQKEIKINA…HLSKIMTELE (85 aa). The active-site Pros-phosphohistidine intermediate is the H15.

It belongs to the HPr family.

The protein localises to the cytoplasm. Functionally, general (non sugar-specific) component of the phosphoenolpyruvate-dependent sugar phosphotransferase system (sugar PTS). This major carbohydrate active-transport system catalyzes the phosphorylation of incoming sugar substrates concomitantly with their translocation across the cell membrane. The phosphoryl group from phosphoenolpyruvate (PEP) is transferred to the phosphoryl carrier protein HPr by enzyme I. Phospho-HPr then transfers it to the PTS EIIA domain. The chain is Phosphocarrier protein HPr (ptsH) from Buchnera aphidicola subsp. Schizaphis graminum (strain Sg).